A 428-amino-acid chain; its full sequence is 3-phosphoshikimate 1-carboxyvinyltransferase (428 aa).

3-phosphoshikimate is bound by residues lysine 20, serine 21, and arginine 25. A phosphoenolpyruvate-binding site is contributed by lysine 20. Positions 92 and 120 each coordinate phosphoenolpyruvate. 3-phosphoshikimate contacts are provided by serine 166, glutamine 168, aspartate 314, and lysine 341. Residue glutamine 168 coordinates phosphoenolpyruvate. Residue aspartate 314 is the Proton acceptor of the active site. Arginine 345 and arginine 387 together coordinate phosphoenolpyruvate.

It belongs to the EPSP synthase family. Monomer.

Its subcellular location is the cytoplasm. It carries out the reaction 3-phosphoshikimate + phosphoenolpyruvate = 5-O-(1-carboxyvinyl)-3-phosphoshikimate + phosphate. Its pathway is metabolic intermediate biosynthesis; chorismate biosynthesis; chorismate from D-erythrose 4-phosphate and phosphoenolpyruvate: step 6/7. Its function is as follows. Catalyzes the transfer of the enolpyruvyl moiety of phosphoenolpyruvate (PEP) to the 5-hydroxyl of shikimate-3-phosphate (S3P) to produce enolpyruvyl shikimate-3-phosphate and inorganic phosphate. The polypeptide is 3-phosphoshikimate 1-carboxyvinyltransferase (Listeria monocytogenes serovar 1/2a (strain ATCC BAA-679 / EGD-e)).